The primary structure comprises 215 residues: Cytochrome b6 (215 aa).

A helical transmembrane segment spans residues 32–52 (IFYCLGGITFTLFLVQVATGF). A heme c-binding site is contributed by Cys-35. Heme b-binding residues include His-86 and His-100. The next 3 helical transmembrane spans lie at 90–110 (ASMMVLSMILHVCRVYLTGGF), 116–136 (LTWITGVIMAVCTVSFGVTGY), and 186–206 (LHTFVLPLLTVVFMLAHFLMI). Heme b-binding residues include His-187 and His-202.

This sequence belongs to the cytochrome b family. PetB subfamily. As to quaternary structure, the 4 large subunits of the cytochrome b6-f complex are cytochrome b6, subunit IV (17 kDa polypeptide, PetD), cytochrome f and the Rieske protein, while the 4 small subunits are PetG, PetL, PetM and PetN. The complex functions as a dimer. Heme b is required as a cofactor. Heme c serves as cofactor.

It is found in the plastid. The protein localises to the chloroplast thylakoid membrane. Component of the cytochrome b6-f complex, which mediates electron transfer between photosystem II (PSII) and photosystem I (PSI), cyclic electron flow around PSI, and state transitions. The sequence is that of Cytochrome b6 from Tupiella akineta (Green alga).